We begin with the raw amino-acid sequence, 363 residues long: NAD(P)H-quinone oxidoreductase subunit 1, chloroplastic (363 aa).

6 consecutive transmembrane segments (helical) span residues 27-47, 98-118, 127-147, 248-268, 300-320, and 336-356; these read IWLL…VLVI, FSIG…VIPF, LSIG…GLLM, YSGI…LVSS, VFGT…FLFI, and LLNL…LLTT.

The protein belongs to the complex I subunit 1 family. In terms of assembly, NDH is composed of at least 16 different subunits, 5 of which are encoded in the nucleus.

Its subcellular location is the plastid. It localises to the chloroplast thylakoid membrane. The enzyme catalyses a plastoquinone + NADH + (n+1) H(+)(in) = a plastoquinol + NAD(+) + n H(+)(out). The catalysed reaction is a plastoquinone + NADPH + (n+1) H(+)(in) = a plastoquinol + NADP(+) + n H(+)(out). In terms of biological role, NDH shuttles electrons from NAD(P)H:plastoquinone, via FMN and iron-sulfur (Fe-S) centers, to quinones in the photosynthetic chain and possibly in a chloroplast respiratory chain. The immediate electron acceptor for the enzyme in this species is believed to be plastoquinone. Couples the redox reaction to proton translocation, and thus conserves the redox energy in a proton gradient. The chain is NAD(P)H-quinone oxidoreductase subunit 1, chloroplastic from Platanus occidentalis (Sycamore).